The following is a 456-amino-acid chain: Dihydroorotase (456 aa).

Residues H60 and H62 each contribute to the Zn(2+) site. Substrate contacts are provided by residues 62 to 64 and N94; that span reads HFR. Zn(2+) contacts are provided by E146, H180, H234, and D313. The active site involves D313. Residue H317 participates in substrate binding.

The protein belongs to the metallo-dependent hydrolases superfamily. DHOase family. Class I DHOase subfamily. The cofactor is Zn(2+).

It catalyses the reaction (S)-dihydroorotate + H2O = N-carbamoyl-L-aspartate + H(+). Its pathway is pyrimidine metabolism; UMP biosynthesis via de novo pathway; (S)-dihydroorotate from bicarbonate: step 3/3. Functionally, catalyzes the reversible cyclization of carbamoyl aspartate to dihydroorotate. The sequence is that of Dihydroorotase from Methanosarcina mazei (strain ATCC BAA-159 / DSM 3647 / Goe1 / Go1 / JCM 11833 / OCM 88) (Methanosarcina frisia).